Consider the following 210-residue polypeptide: Pyridoxine/pyridoxamine 5'-phosphate oxidase (210 aa).

Substrate-binding positions include 7–10 and lysine 65; that span reads RQSY. FMN contacts are provided by residues 60–65, 75–76, arginine 81, lysine 82, and glutamine 104; these read RIVLIK and FT. Substrate-binding residues include tyrosine 122, arginine 126, and serine 130. FMN-binding positions include 139–140 and tryptophan 182; that span reads QS. Residue 188–190 participates in substrate binding; it reads RLH. Arginine 192 contacts FMN.

This sequence belongs to the pyridoxamine 5'-phosphate oxidase family. As to quaternary structure, homodimer. It depends on FMN as a cofactor.

The catalysed reaction is pyridoxamine 5'-phosphate + O2 + H2O = pyridoxal 5'-phosphate + H2O2 + NH4(+). It carries out the reaction pyridoxine 5'-phosphate + O2 = pyridoxal 5'-phosphate + H2O2. The protein operates within cofactor metabolism; pyridoxal 5'-phosphate salvage; pyridoxal 5'-phosphate from pyridoxamine 5'-phosphate: step 1/1. Its pathway is cofactor metabolism; pyridoxal 5'-phosphate salvage; pyridoxal 5'-phosphate from pyridoxine 5'-phosphate: step 1/1. Its function is as follows. Catalyzes the oxidation of either pyridoxine 5'-phosphate (PNP) or pyridoxamine 5'-phosphate (PMP) into pyridoxal 5'-phosphate (PLP). This Bordetella avium (strain 197N) protein is Pyridoxine/pyridoxamine 5'-phosphate oxidase.